The chain runs to 424 residues: Enolase (424 aa).

Residue glutamine 162 participates in (2R)-2-phosphoglycerate binding. Catalysis depends on glutamate 204, which acts as the Proton donor. Mg(2+) contacts are provided by aspartate 241, glutamate 284, and aspartate 311. Residues lysine 336, arginine 365, serine 366, and lysine 387 each coordinate (2R)-2-phosphoglycerate. Lysine 336 serves as the catalytic Proton acceptor.

Belongs to the enolase family. The cofactor is Mg(2+).

The protein resides in the cytoplasm. The protein localises to the secreted. It localises to the cell surface. It catalyses the reaction (2R)-2-phosphoglycerate = phosphoenolpyruvate + H2O. Its pathway is carbohydrate degradation; glycolysis; pyruvate from D-glyceraldehyde 3-phosphate: step 4/5. Catalyzes the reversible conversion of 2-phosphoglycerate (2-PG) into phosphoenolpyruvate (PEP). It is essential for the degradation of carbohydrates via glycolysis. The chain is Enolase from Sinorhizobium medicae (strain WSM419) (Ensifer medicae).